Consider the following 92-residue polypeptide: UPF0223 protein SPy_1248/M5005_Spy0958 (92 aa).

It belongs to the UPF0223 family.

The chain is UPF0223 protein SPy_1248/M5005_Spy0958 from Streptococcus pyogenes serotype M1.